The chain runs to 71 residues: MERLSEDDPAAQALEYRHDASSVQHPAYEEGQTCLNCLLYTDASAQDWGPCSVFPGKLVSANGWCTAWVAR.

The [4Fe-4S] cluster site is built by Cys-34, Cys-37, Cys-51, and Cys-65.

Belongs to the high-potential iron-sulfur protein (HiPIP) family. Homodimer.

Specific class of high-redox-potential 4Fe-4S ferredoxins. Functions in anaerobic electron transport in most purple and in some other photosynthetic bacteria and in at least one genus (Paracoccus) of halophilic, denitrifying bacteria. The chain is High-potential iron-sulfur protein isozyme 2 (hip2) from Ectothiorhodospira shaposhnikovii (Ectothiorhodospira vacuolata).